Reading from the N-terminus, the 731-residue chain is Replication restart protein PriA (731 aa).

A 3'BD region spans residues 1–98; that stretch reads MSVAHVALPV…HPIGDVLFHA (98 aa). Residues 115–177 form a WH region; the sequence is WYWFATEQGQ…RGKGLAELAC (63 aa). The segment at 200–375 is helicase lobe 1; sequence TEQATAVGAI…VRQGKYRQLT (176 aa). Positions 210–376 constitute a Helicase ATP-binding domain; sequence HSAADRFSAW…RQGKYRQLTL (167 aa). 223 to 230 lines the ATP pocket; it reads GITGSGKT. ADP is bound by residues G226, G228, K229, T230, E231, and R263. A DEAH box motif is present at residues 319 to 322; it reads DEEH. An Aromatic-rich loop (ARL) motif is present at residues 326 to 340; it reads YKQQEGWRYHARDLA. The tract at residues 387-430 is helicase lobe 2, N-terminus; it reads QQHVLDLKGQPLQAGLSPALISRMRQHLQADNQVILFLNRRGFA. The tract at residues 431–485 is CRR; that stretch reads PALLCHDCGWIAECPRCDSYYTLHQAQHHLRCHHCDSQRPIPRQCPSCGSTHLVP. Zn(2+) is bound by residues C435, C438, C444, C447, C462, C465, C475, and C478. In terms of domain architecture, Helicase C-terminal spans 470-637; that stretch reads PIPRQCPSCG…QLPPWTSHVL (168 aa). Residues 486-626 are helicase lobe 2, C-terminus; the sequence is VGIGTEQLEQ…AEQALAERQT (141 aa). Residue K543 participates in ADP binding. A CTD region spans residues 633–731; that stretch reads TSHVLIRAED…WVLDVDPIEG (99 aa).

Belongs to the helicase family. PriA subfamily. In terms of assembly, binds SSB. Component of the replication restart primosome. Zn(2+) is required as a cofactor.

It catalyses the reaction Couples ATP hydrolysis with the unwinding of duplex DNA by translocating in the 3'-5' direction.. The enzyme catalyses ATP + H2O = ADP + phosphate + H(+). ATPase activity is stimulated by single-stranded binding protein (SSB). In terms of biological role, initiates the restart of stalled replication forks, which reloads the replicative helicase on sites other than the origin of replication. Recognizes and binds to abandoned replication forks and remodels them to uncover a helicase loading site. Promotes assembly of the primosome at these replication forks. Its function is as follows. Recognizes abandoned replication forks and remodels SSB on ssDNA to uncover a loading site for DnaB. Binds replication fork DNA, has DNA-dependent ATPase activity in the presence of replication fork DNA, restores normal cell growth and SOS induction to E.coli mutant pirA304. The polypeptide is Replication restart protein PriA (Klebsiella pneumoniae subsp. pneumoniae (strain ATCC 700721 / MGH 78578)).